The primary structure comprises 602 residues: Sulfite reductase [NADPH] hemoprotein beta-component (602 aa).

Positions 1–15 (MDDHKTASPPRERSY) are enriched in basic and acidic residues. A disordered region spans residues 1–24 (MDDHKTASPPRERSYETPPAERPI). [4Fe-4S] cluster-binding residues include Cys458, Cys464, Cys503, and Cys507. Residue Cys507 participates in siroheme binding.

The protein belongs to the nitrite and sulfite reductase 4Fe-4S domain family. In terms of assembly, alpha(8)-beta(8). The alpha component is a flavoprotein, the beta component is a hemoprotein. It depends on siroheme as a cofactor. Requires [4Fe-4S] cluster as cofactor.

The catalysed reaction is hydrogen sulfide + 3 NADP(+) + 3 H2O = sulfite + 3 NADPH + 4 H(+). Its pathway is sulfur metabolism; hydrogen sulfide biosynthesis; hydrogen sulfide from sulfite (NADPH route): step 1/1. Component of the sulfite reductase complex that catalyzes the 6-electron reduction of sulfite to sulfide. This is one of several activities required for the biosynthesis of L-cysteine from sulfate. The sequence is that of Sulfite reductase [NADPH] hemoprotein beta-component from Methylobacterium nodulans (strain LMG 21967 / CNCM I-2342 / ORS 2060).